A 571-amino-acid chain; its full sequence is Proline--tRNA ligase (571 aa).

The protein belongs to the class-II aminoacyl-tRNA synthetase family. ProS type 1 subfamily. Homodimer.

The protein localises to the cytoplasm. The enzyme catalyses tRNA(Pro) + L-proline + ATP = L-prolyl-tRNA(Pro) + AMP + diphosphate. Functionally, catalyzes the attachment of proline to tRNA(Pro) in a two-step reaction: proline is first activated by ATP to form Pro-AMP and then transferred to the acceptor end of tRNA(Pro). As ProRS can inadvertently accommodate and process non-cognate amino acids such as alanine and cysteine, to avoid such errors it has two additional distinct editing activities against alanine. One activity is designated as 'pretransfer' editing and involves the tRNA(Pro)-independent hydrolysis of activated Ala-AMP. The other activity is designated 'posttransfer' editing and involves deacylation of mischarged Ala-tRNA(Pro). The misacylated Cys-tRNA(Pro) is not edited by ProRS. The sequence is that of Proline--tRNA ligase from Vibrio parahaemolyticus serotype O3:K6 (strain RIMD 2210633).